Consider the following 157-residue polypeptide: Transcription elongation factor GreA (157 aa).

A coiled-coil region spans residues 47 to 75; that stretch reads SGEYEDAKKAQALLEGRIRELKHLLSRAE.

This sequence belongs to the GreA/GreB family.

Its function is as follows. Necessary for efficient RNA polymerase transcription elongation past template-encoded arresting sites. The arresting sites in DNA have the property of trapping a certain fraction of elongating RNA polymerases that pass through, resulting in locked ternary complexes. Cleavage of the nascent transcript by cleavage factors such as GreA or GreB allows the resumption of elongation from the new 3'terminus. GreA releases sequences of 2 to 3 nucleotides. In Chloroflexus aggregans (strain MD-66 / DSM 9485), this protein is Transcription elongation factor GreA.